Consider the following 215-residue polypeptide: Orotate phosphoribosyltransferase (215 aa).

Lys-26 provides a ligand contact to 5-phospho-alpha-D-ribose 1-diphosphate. Orotate is bound at residue Phe-34–Phe-35. Residues Tyr-72–Lys-73, Arg-99, Lys-100, Lys-103, His-105, and Asp-124–Ala-132 contribute to the 5-phospho-alpha-D-ribose 1-diphosphate site. Orotate-binding residues include Thr-128 and Arg-156.

Belongs to the purine/pyrimidine phosphoribosyltransferase family. PyrE subfamily. Homodimer. Requires Mg(2+) as cofactor.

The enzyme catalyses orotidine 5'-phosphate + diphosphate = orotate + 5-phospho-alpha-D-ribose 1-diphosphate. Its pathway is pyrimidine metabolism; UMP biosynthesis via de novo pathway; UMP from orotate: step 1/2. In terms of biological role, catalyzes the transfer of a ribosyl phosphate group from 5-phosphoribose 1-diphosphate to orotate, leading to the formation of orotidine monophosphate (OMP). The chain is Orotate phosphoribosyltransferase from Hahella chejuensis (strain KCTC 2396).